A 295-amino-acid chain; its full sequence is uncharacterized protein (295 aa).

Residues 1–58 form the HTH lysR-type domain; sequence MESGDLRVFQMVAREGTITKAALQLGYVQSNVTARIQQLEAELGTTLFLRHNRGMTLS. Positions 18 to 37 form a DNA-binding region, H-T-H motif; it reads ITKAALQLGYVQSNVTARIQ.

It belongs to the LysR transcriptional regulatory family.

This is an uncharacterized protein from Bacillus subtilis (strain 168).